The primary structure comprises 187 residues: UPF0301 protein YqgE (187 aa).

It belongs to the UPF0301 (AlgH) family.

In Shigella boydii serotype 4 (strain Sb227), this protein is UPF0301 protein YqgE.